Here is a 138-residue protein sequence, read N- to C-terminus: Large-conductance mechanosensitive channel (138 aa).

Transmembrane regions (helical) follow at residues 10-30 and 76-96; these read FAMR…AAFG and GSFI…FLAI.

It belongs to the MscL family. As to quaternary structure, homopentamer.

It is found in the cell inner membrane. Channel that opens in response to stretch forces in the membrane lipid bilayer. May participate in the regulation of osmotic pressure changes within the cell. The sequence is that of Large-conductance mechanosensitive channel from Serratia proteamaculans (strain 568).